The chain runs to 67 residues: ATP synthase F(0) complex subunit 8 (67 aa).

A helical membrane pass occupies residues 8–24 (TWFTVILSMIISLFMLL). Lysine 54 carries the N6-acetyllysine; alternate modification. Lysine 54 bears the N6-succinyllysine; alternate mark. Lysine 57 bears the N6-acetyllysine mark.

This sequence belongs to the ATPase protein 8 family. Component of the ATP synthase complex composed at least of ATP5F1A/subunit alpha, ATP5F1B/subunit beta, ATP5MC1/subunit c (homooctomer), MT-ATP6/subunit a, MT-ATP8/subunit 8, ATP5ME/subunit e, ATP5MF/subunit f, ATP5MG/subunit g, ATP5MK/subunit k, ATP5MJ/subunit j, ATP5F1C/subunit gamma, ATP5F1D/subunit delta, ATP5F1E/subunit epsilon, ATP5PF/subunit F6, ATP5PB/subunit b, ATP5PD/subunit d, ATP5PO/subunit OSCP. ATP synthase complex consists of a soluble F(1) head domain (subunits alpha(3) and beta(3)) - the catalytic core - and a membrane F(0) domain - the membrane proton channel (subunits c, a, 8, e, f, g, k and j). These two domains are linked by a central stalk (subunits gamma, delta, and epsilon) rotating inside the F1 region and a stationary peripheral stalk (subunits F6, b, d, and OSCP). Interacts with PRICKLE3.

It is found in the mitochondrion membrane. Its function is as follows. Subunit 8, of the mitochondrial membrane ATP synthase complex (F(1)F(0) ATP synthase or Complex V) that produces ATP from ADP in the presence of a proton gradient across the membrane which is generated by electron transport complexes of the respiratory chain. ATP synthase complex consist of a soluble F(1) head domain - the catalytic core - and a membrane F(1) domain - the membrane proton channel. These two domains are linked by a central stalk rotating inside the F(1) region and a stationary peripheral stalk. During catalysis, ATP synthesis in the catalytic domain of F(1) is coupled via a rotary mechanism of the central stalk subunits to proton translocation. In vivo, can only synthesize ATP although its ATP hydrolase activity can be activated artificially in vitro. Part of the complex F(0) domain. This Cavia porcellus (Guinea pig) protein is ATP synthase F(0) complex subunit 8.